Consider the following 434-residue polypeptide: Pectate lyase (434 aa).

The first 22 residues, 1–22 (MKAAQFFLYSLLFFASAALSSA), serve as a signal peptide directing secretion. Residues asparagine 68 and asparagine 97 are each glycosylated (N-linked (GlcNAc...) asparagine). Ca(2+) contacts are provided by aspartate 232, aspartate 256, and aspartate 260. Arginine 312 is a catalytic residue.

This sequence belongs to the polysaccharide lyase 1 family. Ca(2+) serves as cofactor.

The catalysed reaction is Eliminative cleavage of (1-&gt;4)-alpha-D-galacturonan to give oligosaccharides with 4-deoxy-alpha-D-galact-4-enuronosyl groups at their non-reducing ends.. It functions in the pathway glycan metabolism; pectin degradation; 2-dehydro-3-deoxy-D-gluconate from pectin: step 2/5. This Lilium longiflorum (Trumpet lily) protein is Pectate lyase.